The following is a 430-amino-acid chain: 3-phosphoshikimate 1-carboxyvinyltransferase (430 aa).

Residues K20, S21, and R25 each contribute to the 3-phosphoshikimate site. K20 contacts phosphoenolpyruvate. Residues G92 and R120 each contribute to the phosphoenolpyruvate site. 4 residues coordinate 3-phosphoshikimate: S166, Q168, D312, and K339. Q168 serves as a coordination point for phosphoenolpyruvate. Residue D312 is the Proton acceptor of the active site. Phosphoenolpyruvate is bound by residues R343 and R387.

Belongs to the EPSP synthase family. Monomer.

It is found in the cytoplasm. It catalyses the reaction 3-phosphoshikimate + phosphoenolpyruvate = 5-O-(1-carboxyvinyl)-3-phosphoshikimate + phosphate. Its pathway is metabolic intermediate biosynthesis; chorismate biosynthesis; chorismate from D-erythrose 4-phosphate and phosphoenolpyruvate: step 6/7. Its function is as follows. Catalyzes the transfer of the enolpyruvyl moiety of phosphoenolpyruvate (PEP) to the 5-hydroxyl of shikimate-3-phosphate (S3P) to produce enolpyruvyl shikimate-3-phosphate and inorganic phosphate. The sequence is that of 3-phosphoshikimate 1-carboxyvinyltransferase from Lactococcus lactis subsp. cremoris (strain MG1363).